The primary structure comprises 203 residues: Cardiotrophin-2 (203 aa).

Positions 1 to 21 (MSCSLARLCLLTLLSPPLSSA) are cleaved as a signal peptide. A glycan (N-linked (GlcNAc...) asparagine) is linked at asparagine 43.

This sequence belongs to the IL-6 superfamily.

The protein resides in the secreted. May have an important role in neuronal precursor development and maturation. The protein is Cardiotrophin-2 (CTF2) of Pan troglodytes (Chimpanzee).